The sequence spans 391 residues: Rhizopuspepsin-2 (391 aa).

Residues 1-21 form the signal peptide; sequence MKLTLISSCVALAFMALATEA. The propeptide at 22 to 68 is activation peptide; it reads APSGKKLSIPLTKNTNYKPSAKNAIQKALAKYHRFRTTSSSNSTSTE. Positions 84–388 constitute a Peptidase A1 domain; the sequence is YYGKVTVGTP…NQEVPEVQIA (305 aa). The active site involves aspartate 102. Residues cysteine 115 and cysteine 118 are joined by a disulfide bond. The active site involves aspartate 285. The cysteines at positions 319 and 352 are disulfide-linked.

This sequence belongs to the peptidase A1 family.

The catalysed reaction is Hydrolysis of proteins with broad specificity similar to that of pepsin A, preferring hydrophobic residues at P1 and P1'. Clots milk and activates trypsinogen. Does not cleave 4-Gln-|-His-5, but does cleave 10-His-|-Leu-11 and 12-Val-|-Glu-13 in B chain of insulin.. This Rhizopus niveus protein is Rhizopuspepsin-2.